A 481-amino-acid chain; its full sequence is Glutamyl-tRNA(Gln) amidotransferase subunit A (481 aa).

Active-site charge relay system residues include Lys-76 and Ser-151. The Acyl-ester intermediate role is filled by Ser-175.

The protein belongs to the amidase family. GatA subfamily. Heterotrimer of A, B and C subunits.

It catalyses the reaction L-glutamyl-tRNA(Gln) + L-glutamine + ATP + H2O = L-glutaminyl-tRNA(Gln) + L-glutamate + ADP + phosphate + H(+). In terms of biological role, allows the formation of correctly charged Gln-tRNA(Gln) through the transamidation of misacylated Glu-tRNA(Gln) in organisms which lack glutaminyl-tRNA synthetase. The reaction takes place in the presence of glutamine and ATP through an activated gamma-phospho-Glu-tRNA(Gln). The chain is Glutamyl-tRNA(Gln) amidotransferase subunit A from Chlorobaculum tepidum (strain ATCC 49652 / DSM 12025 / NBRC 103806 / TLS) (Chlorobium tepidum).